The primary structure comprises 159 residues: Succinate dehydrogenase [ubiquinone] cytochrome b small subunit, mitochondrial (159 aa).

The transit peptide at 1–36 (MATLWRLSVLCGARGGGALVLRTSVVRPAHVSAFLQ) directs the protein to the mitochondrion. Residues 37–63 (DRHTPGWCGVQHIHLSPSHQASSKAAS) lie on the Mitochondrial matrix side of the membrane. A helical membrane pass occupies residues 64–85 (LHWTGERVVSVLLLGLLPAAYL). Residues 86 to 90 (NPCSA) are Mitochondrial intermembrane-facing. The helical transmembrane segment at 91–111 (MDYSLAAALTLHGHWGIGQVV) threads the bilayer. His-102 contacts heme b. The Mitochondrial matrix segment spans residues 112–120 (TDYVRGDAL). Tyr-114 is a binding site for a ubiquinone. A helical transmembrane segment spans residues 121 to 142 (QKVAKAGLLALSAFTFAGLCYF). At 143–159 (NYHDVGICKAVAMLWKL) the chain is on the mitochondrial intermembrane side.

The protein belongs to the CybS family. As to quaternary structure, component of complex II composed of four subunits: the flavoprotein (FP) SDHA, iron-sulfur protein (IP) SDHB, and a cytochrome b560 composed of SDHC and SDHD.

It is found in the mitochondrion inner membrane. Its pathway is carbohydrate metabolism; tricarboxylic acid cycle. In terms of biological role, membrane-anchoring subunit of succinate dehydrogenase (SDH) that is involved in complex II of the mitochondrial electron transport chain and is responsible for transferring electrons from succinate to ubiquinone (coenzyme Q). SDH also oxidizes malate to the non-canonical enol form of oxaloacetate, enol-oxaloacetate. Enol-oxaloacetate, which is a potent inhibitor of the succinate dehydrogenase activity, is further isomerized into keto-oxaloacetate. The polypeptide is Succinate dehydrogenase [ubiquinone] cytochrome b small subunit, mitochondrial (SDHD) (Sus scrofa (Pig)).